The chain runs to 190 residues: Small ribosomal subunit protein uS5 (190 aa).

One can recognise an S5 DRBM domain in the interval 22 to 85 (FVDKLVHINR…DSAKRNLTRV (64 aa)).

The protein belongs to the universal ribosomal protein uS5 family. In terms of assembly, part of the 30S ribosomal subunit. Contacts proteins S4 and S8.

Functionally, with S4 and S12 plays an important role in translational accuracy. Its function is as follows. Located at the back of the 30S subunit body where it stabilizes the conformation of the head with respect to the body. The polypeptide is Small ribosomal subunit protein uS5 (Bradyrhizobium sp. (strain BTAi1 / ATCC BAA-1182)).